Reading from the N-terminus, the 1551-residue chain is Dual oxidase 1 (1551 aa).

The signal sequence occupies residues 1-21 (MAVYSAVAWILLFGVLASLGA). Residues 22-596 (QNPVSWEVQR…YFKGSGFGFG (575 aa)) lie on the Extracellular side of the membrane. The tract at residues 26 to 593 (SWEVQRFDGW…VRDYFKGSGF (568 aa)) is peroxidase-like; mediates peroxidase activity. N-linked (GlcNAc...) asparagine glycans are attached at residues Asn-94, Asn-342, Asn-354, Asn-461, and Asn-534. Residues 597-617 (LTIGTLCCFPLVSLLSAWIVA) traverse the membrane as a helical segment. The Cytoplasmic segment spans residues 618–1044 (RLRMRNFKRL…KRFIENYRRH (427 aa)). 3 EF-hand domains span residues 815–850 (PQDM…FMKG), 851–886 (SPEE…FIEI), and 895–930 (QLAE…HDSD). The Ca(2+) site is built by Asp-828, Asp-830, Asn-832, Tyr-834, Glu-839, Asp-864, Asp-866, Asn-868, and Glu-875. An interaction with TXNDC11 region spans residues 956-1248 (YISQEKICPS…GSFALIQMPR (293 aa)). Residues 1045–1065 (IGCVAVFYTITGALFLERAYY) form a helical membrane-spanning segment. The Extracellular segment spans residues 1066 to 1080 (YAFAAHHSGITDTTR). The helical transmembrane segment at 1081–1101 (VGIILSRGTAASISFMFSYIL) threads the bilayer. The Ferric oxidoreductase domain occupies 1087–1269 (RGTAASISFM…YVGDKLVSLS (183 aa)). Over 1102 to 1136 (LTMCRNLITFLRETFLNRYIPFDAAVDFHRFIAST) the chain is Cytoplasmic. A helical membrane pass occupies residues 1137-1157 (AIILTVLHSAGHVVNVYLFSI). Residues 1158–1188 (SPLSVLSCLFPDLFHDDGSEFPQKYYWWFFQ) lie on the Extracellular side of the membrane. The chain crosses the membrane as a helical span at residues 1189-1209 (TVPGLTGVLLLLALAIMYVFA). The Cytoplasmic portion of the chain corresponds to 1210–1226 (SHHFRRRSFRGFWLTHH). A helical transmembrane segment spans residues 1227 to 1247 (LYIFLYILLIIHGSFALIQMP). Residue Arg-1248 is a topological domain, extracellular. Residues 1249–1269 (FHIFFLVPAIIYVGDKLVSLS) traverse the membrane as a helical segment. Positions 1270-1376 (RKKVEISVVK…DGPFGEGHQE (107 aa)) constitute an FAD-binding FR-type domain. The Cytoplasmic portion of the chain corresponds to 1270–1551 (RKKVEISVVK…THFSHHYENF (282 aa)).

The protein in the N-terminal section; belongs to the peroxidase family. As to quaternary structure, interacts with TXNDC11, TPO and CYBA. In terms of processing, N-glycosylated. Expressed in thyrocytes (at protein level).

Its subcellular location is the apical cell membrane. It carries out the reaction NADH + O2 + H(+) = H2O2 + NAD(+). The catalysed reaction is NADPH + O2 + H(+) = H2O2 + NADP(+). It participates in hormone biosynthesis; thyroid hormone biosynthesis. The NADPH oxidase activity is calcium-dependent. Peroxidase activity is inhibited by aminobenzohydrazide. In terms of biological role, generates hydrogen peroxide which is required for the activity of thyroid peroxidase/TPO and lactoperoxidase/LPO. Plays a role in thyroid hormones synthesis and lactoperoxidase-mediated antimicrobial defense at the surface of mucosa. May have its own peroxidase activity through its N-terminal peroxidase-like domain. The polypeptide is Dual oxidase 1 (Duox1) (Rattus norvegicus (Rat)).